Here is a 187-residue protein sequence, read N- to C-terminus: Ribosome maturation factor RimM (187 aa).

One can recognise a PRC barrel domain in the interval 95–178 (DEDEFFYADL…GLVEDKDESL (84 aa)).

Belongs to the RimM family. In terms of assembly, binds ribosomal protein uS19.

The protein localises to the cytoplasm. Its function is as follows. An accessory protein needed during the final step in the assembly of 30S ribosomal subunit, possibly for assembly of the head region. Essential for efficient processing of 16S rRNA. May be needed both before and after RbfA during the maturation of 16S rRNA. It has affinity for free ribosomal 30S subunits but not for 70S ribosomes. The chain is Ribosome maturation factor RimM from Sinorhizobium fredii (strain NBRC 101917 / NGR234).